A 276-amino-acid polypeptide reads, in one-letter code: Diacetylchitobiose uptake system permease protein DasC (276 aa).

6 helical membrane-spanning segments follow: residues 14 to 34 (TAVV…ATAF), 74 to 94 (LIVT…GSFA), 105 to 125 (GFIV…VIAI), 137 to 157 (SLVP…ILTL), 186 to 206 (VILP…FITA), and 241 to 261 (GATM…FVYL). In terms of domain architecture, ABC transmembrane type-1 spans 70–261 (VSNSLIVTVC…IPILILFVYL (192 aa)).

Belongs to the binding-protein-dependent transport system permease family. The complex is composed of two ATP-binding proteins (MsiK), two transmembrane proteins (DasB and DasC) and a solute-binding protein (DasA).

It localises to the cell membrane. Its function is as follows. Part of the ABC transporter complex DasABC-MsiK involved in N,N'-diacetylchitobiose ((GlcNAc)2) uptake. Responsible for the translocation of the substrate across the membrane. This chain is Diacetylchitobiose uptake system permease protein DasC, found in Streptomyces coelicolor (strain ATCC BAA-471 / A3(2) / M145).